The chain runs to 160 residues: uncharacterized protein (160 aa).

The RING-type zinc-finger motif lies at 8–46; it reads CAVCLDFFVEPCIIECGHSYCRFCIESHLNINEKCPLCR.

This is an uncharacterized protein from Caenorhabditis elegans.